The following is a 95-amino-acid chain: Virion membrane protein OPG135 (95 aa).

A signal peptide spans 1-22 (MSCYTAILKSVGGLALFQDANG). Residues 23 to 45 (AIDLCRHFFMYFCEQKLRPNSFW) lie on the Intravirion side of the membrane. The chain crosses the membrane as a helical span at residues 46–66 (FVVVRAIASMIMYLVLGIALL). At 67–83 (YISEQDDKKNTNNASNS) the chain is on the virion surface side. Positions 76 to 95 (NTNNASNSNKLNESSINSNS) are disordered. Residues 77–95 (TNNASNSNKLNESSINSNS) are compositionally biased toward low complexity. N-linked (GlcNAc...) asparagine; by host glycosylation is found at asparagine 79 and asparagine 87.

The protein belongs to the oerthopoxvirus OPG135 family.

Its subcellular location is the virion membrane. It localises to the host cytoplasm. Its function is as follows. Envelope protein. Required for an early step in virion morphogenesis. This chain is Virion membrane protein OPG135 (OPG135), found in Homo sapiens (Human).